A 440-amino-acid chain; its full sequence is Amino acid transporter AVT6D (440 aa).

11 helical membrane-spanning segments follow: residues 26–46 (FAGA…MAIP), 47–67 (AAFK…IAWL), 102–122 (AVTV…SIII), 149–169 (WNTR…PLVL), 182–202 (ISFL…IIAL), 219–239 (GGLS…AFTF), 262–282 (ISVI…YLLF), 309–329 (IVRL…NFSL), 356–376 (FPLL…WYFF), 377–397 (QFLG…AIVL), and 410–430 (IVAS…ISTN).

It belongs to the amino acid/polyamine transporter 2 family. Amino acid/auxin permease (AAAP) (TC 2.A.18.6) subfamily.

The protein localises to the membrane. The protein is Amino acid transporter AVT6D of Arabidopsis thaliana (Mouse-ear cress).